Here is a 527-residue protein sequence, read N- to C-terminus: Estrogen receptor beta (527 aa).

A modulating region spans residues 1-145 (MDVKNSPSSL…SPSSKRDAHF (145 aa)). A phosphoserine; by MAPK mark is found at serine 84 and serine 102. 2 NR C4-type zinc fingers span residues 146–166 (CAVC…CEGC) and 182–206 (CPAT…LRKC). Residues 146-211 (CAVCSDYASG…RLRKCYEVGM (66 aa)) constitute a DNA-binding region (nuclear receptor). The 235-residue stretch at 261 to 495 (SPEQLVLTLL…DLLLEMLNAH (235 aa)) folds into the NR LBD domain.

Belongs to the nuclear hormone receptor family. NR3 subfamily. As to quaternary structure, binds DNA as a homodimer. Can form a heterodimer with ESR1. Interacts with NCOA1, NCOA3, NCOA5 and NCOA6 coactivators, leading to a strong increase of transcription of target genes. Interacts with UBE1C and AKAP13. Interacts with DNTTIP2. Interacts with CCDC62 in the presence of estradiol/E2; this interaction seems to enhance the transcription of target genes. Interacts with DNAAF4. Interacts with PRMT2. Interacts with CCAR2 (via N-terminus) in a ligand-independent manner. Interacts with RBM39, in the presence of estradiol (E2). Interacts with STUB1/CHIP. Phosphorylation at Ser-84 and Ser-102 recruits NCOA1. In terms of tissue distribution, present in granulosa cells of antral follicles in various stages of follicular growth.

It is found in the nucleus. Nuclear hormone receptor. Binds estrogens with an affinity similar to that of ESR1ESR1/ER-alpha, and activates expression of reporter genes containing estrogen response elements (ERE) in an estrogen-dependent manner. The chain is Estrogen receptor beta (ESR2) from Bos taurus (Bovine).